Reading from the N-terminus, the 352-residue chain is Probable protein phosphatase 2C 42 (352 aa).

Residues 26–321 (AYASSAMQGY…DNMSVILVRF (296 aa)) form the PPM-type phosphatase domain. Asp-62, Gly-63, Asp-267, and Asp-312 together coordinate Mn(2+). The tract at residues 328-352 (RGARAATSSTSTGTVPSRHSKSISL) is disordered. A compositionally biased stretch (low complexity) spans 329 to 341 (GARAATSSTSTGT).

The protein belongs to the PP2C family. Mg(2+) is required as a cofactor. The cofactor is Mn(2+).

The catalysed reaction is O-phospho-L-seryl-[protein] + H2O = L-seryl-[protein] + phosphate. It carries out the reaction O-phospho-L-threonyl-[protein] + H2O = L-threonyl-[protein] + phosphate. The sequence is that of Probable protein phosphatase 2C 42 from Oryza sativa subsp. japonica (Rice).